The chain runs to 144 residues: Transcriptional regulator SlyA (144 aa).

The 134-residue stretch at 2 to 135 (ESPLGSDLAR…LSNMIAKLEK (134 aa)) folds into the HTH marR-type domain. The H-T-H motif DNA-binding region spans 49-72 (QIQLAKAIGIEQPSLVRTLDQLEE).

This sequence belongs to the SlyA family. Homodimer.

Transcription regulator that can specifically activate or repress expression of target genes. This Sodalis glossinidius (strain morsitans) protein is Transcriptional regulator SlyA.